The chain runs to 188 residues: Elongation factor P-like protein (188 aa).

It belongs to the elongation factor P family.

This Xylella fastidiosa (strain M12) protein is Elongation factor P-like protein.